Here is a 1038-residue protein sequence, read N- to C-terminus: SEH-associated protein 4 (1038 aa).

One copy of the WD 1 repeat lies at 50 to 90 (KDFGSITCLDYSESEIGMIGVGEKNGYLRIFNISGQNSSSP). 2 positions are modified to phosphoserine: Ser123 and Ser136. WD repeat units follow at residues 147–189 (KKQR…DSHE), 235–276 (QHPT…DQAS), and 544–587 (NTWR…SNQD).

This sequence belongs to the WD repeat mio family. Component of the SEA complex composed of at least IML1/SEA1, RTC1/SEA2, MTC5/SEA3, NPR2, NPR3, SEA4, SEC13 and SEH1.

It localises to the cytoplasm. It is found in the vacuole membrane. In terms of biological role, component of the SEA complex which coats the vacuolar membrane and is involved in intracellular trafficking, autophagy, response to nitrogen starvation, and amino acid biogenesis. The protein is SEH-associated protein 4 (SEA4) of Saccharomyces cerevisiae (strain ATCC 204508 / S288c) (Baker's yeast).